The chain runs to 304 residues: N-acetyl-D-glucosamine kinase (304 aa).

ATP-binding positions include glycine 4–lysine 11 and glycine 133–isoleucine 140. Zn(2+)-binding residues include histidine 157, cysteine 177, cysteine 179, and cysteine 184.

The protein belongs to the ROK (NagC/XylR) family. NagK subfamily.

It carries out the reaction N-acetyl-D-glucosamine + ATP = N-acetyl-D-glucosamine 6-phosphate + ADP + H(+). It functions in the pathway cell wall biogenesis; peptidoglycan recycling. Functionally, catalyzes the phosphorylation of N-acetyl-D-glucosamine (GlcNAc) derived from cell-wall degradation, yielding GlcNAc-6-P. The sequence is that of N-acetyl-D-glucosamine kinase from Pectobacterium atrosepticum (strain SCRI 1043 / ATCC BAA-672) (Erwinia carotovora subsp. atroseptica).